Consider the following 855-residue polypeptide: Zinc finger protein 814 (855 aa).

The 77-residue stretch at 15 to 91 folds into the KRAB domain; sequence VTFEDVAVNF…PMAGVSPKKA (77 aa). A C2H2-type 1; degenerate zinc finger spans residues 120–142; it reads HRCEAWGNKLYDSGNFHQHQNEH. C2H2-type zinc fingers lie at residues 242 to 264, 269 to 291, 296 to 318, 324 to 346, 352 to 374, 380 to 402, 408 to 430, 436 to 458, 464 to 486, 492 to 514, 520 to 542, 548 to 570, 576 to 598, 604 to 626, 632 to 654, 660 to 682, 688 to 710, 716 to 738, 744 to 766, 772 to 794, 800 to 822, and 828 to 850; these read YVCCECGKSFSKYASLSNHQRVH, HECGECGKSFSKYVSFSNHQRVH, YECGECGKSFSKYASFSNHQRVH, YECGECGKSFSKYVSFSNHQRVH, YECGECGKSFSQKSSLIQHQRFH, YGCEECGKSFSSEGHLRSHQRVH, FKCGECVKSFSHKRSLVHHQRVH, YQCGECGKSFSQKGNLVLHQRVH, YECGECGKSFSSKGHLRNHQQIH, YECGECGKSFSHKGTLILHQRVH, YGCGECGKSFSSIGHLRSHQRVH, YECGECGKSFSHKRSLVHHQRMH, YKCGDCGKSFNEKGHLRNHQRVH, FKCGECGKCFSHKGNLILHQHGH, YVCRECGKLFKKKSHLLVHQRIH, YACEACQKFFRNKYQLIAHQRVH, YECNDCGKSFTHSSTFCVHKRIH, YECSECGKSFAESSSFTKHKRVH, YECSECGKSFAESSSLTKHKRVH, and YKCEKCGKLFNKKSHLLVHQSSH. A Glycyl lysine isopeptide (Lys-Gly) (interchain with G-Cter in SUMO2) cross-link involves residue Lys-335. Lys-391 is covalently cross-linked (Glycyl lysine isopeptide (Lys-Gly) (interchain with G-Cter in SUMO2)).

The polypeptide is Zinc finger protein 814 (ZNF814) (Homo sapiens (Human)).